The following is a 469-amino-acid chain: Argininosuccinate lyase (469 aa).

Belongs to the lyase 1 family. Argininosuccinate lyase subfamily.

It is found in the cytoplasm. The enzyme catalyses 2-(N(omega)-L-arginino)succinate = fumarate + L-arginine. The protein operates within amino-acid biosynthesis; L-arginine biosynthesis; L-arginine from L-ornithine and carbamoyl phosphate: step 3/3. This Saccharophagus degradans (strain 2-40 / ATCC 43961 / DSM 17024) protein is Argininosuccinate lyase.